A 398-amino-acid chain; its full sequence is Probable L-tyrosine/L-aspartate decarboxylase (398 aa).

Position 242 is an N6-(pyridoxal phosphate)lysine (K242).

The protein belongs to the group II decarboxylase family. MfnA subfamily. Pyridoxal 5'-phosphate is required as a cofactor.

The catalysed reaction is L-tyrosine + H(+) = tyramine + CO2. The enzyme catalyses L-aspartate + H(+) = beta-alanine + CO2. It functions in the pathway cofactor biosynthesis; methanofuran biosynthesis. Its pathway is cofactor biosynthesis; coenzyme A biosynthesis. In terms of biological role, catalyzes the decarboxylation of L-tyrosine to produce tyramine for methanofuran biosynthesis. Can also catalyze the decarboxylation of L-aspartate to produce beta-alanine for coenzyme A (CoA) biosynthesis. This is Probable L-tyrosine/L-aspartate decarboxylase from Methanosarcina mazei (strain ATCC BAA-159 / DSM 3647 / Goe1 / Go1 / JCM 11833 / OCM 88) (Methanosarcina frisia).